A 438-amino-acid chain; its full sequence is Enolase 1 (438 aa).

Residues His-160 and Glu-169 each contribute to the substrate site. The Proton donor role is filled by Glu-212. Mg(2+)-binding residues include Asp-247, Glu-296, and Asp-321. Substrate is bound by residues Glu-296 and Asp-321. Lys-346 serves as the catalytic Proton acceptor. Residues 373–376 (SHRS) and Lys-397 each bind substrate.

It belongs to the enolase family. As to quaternary structure, homodimer. Mg(2+) serves as cofactor.

It is found in the cytoplasm. The enzyme catalyses (2R)-2-phosphoglycerate = phosphoenolpyruvate + H2O. It functions in the pathway carbohydrate degradation; glycolysis; pyruvate from D-glyceraldehyde 3-phosphate: step 4/5. In Candida glabrata (strain ATCC 2001 / BCRC 20586 / JCM 3761 / NBRC 0622 / NRRL Y-65 / CBS 138) (Yeast), this protein is Enolase 1 (ENO1).